Consider the following 176-residue polypeptide: PRL-1 phosphatase (176 aa).

Residues 13-166 enclose the Tyrosine-protein phosphatase domain; the sequence is APALIEYKGM…YKPKARLKHK (154 aa). Cys-109 serves as the catalytic Phosphocysteine intermediate. At Cys-173 the chain carries Cysteine methyl ester. The S-farnesyl cysteine moiety is linked to residue Cys-173. A propeptide spans 174–176 (removed in mature form); the sequence is SVQ.

This sequence belongs to the protein-tyrosine phosphatase family. In terms of assembly, homotrimer. Interacts with uex, possibly at the plasma membrane. In terms of tissue distribution, expressed in the adult head (at protein level). Expressed in neurons in the antennal lobe and V-glomeruli (at protein level). Expressed in dorsocentral neurons (at protein level).

The protein localises to the cytoplasm. Its subcellular location is the cell membrane. It localises to the apicolateral cell membrane. It is found in the cell projection. The protein resides in the axon. The enzyme catalyses O-phospho-L-tyrosyl-[protein] + H2O = L-tyrosyl-[protein] + phosphate. Functionally, probable phosphatase. Inhibits growth possibly by negatively regulating Src64B-induced growth. Regulates central nervous system circuit formation and stabilization of synapse-dense terminal arbors. In dorsocentral neurons, regulates synaptogenesis in terminal arbors via modulation of the insulin receptor pathway, likely upstream of Akt1, and via reduction of PtdIns(4,5)P2 (Phosphatidylinositol 4,5-bisphosphate) levels. In the nervous system, plays a protective role together with uex in response to olfactory carbon dioxide stimulation. In Drosophila melanogaster (Fruit fly), this protein is PRL-1 phosphatase.